Here is a 295-residue protein sequence, read N- to C-terminus: Bis(5'-nucleosyl)-tetraphosphatase, symmetrical (295 aa).

Residues 271-295 (LSIEHPRHTHTPRRKAKKRHKRSPK) form a disordered region. Positions 277 to 295 (RHTHTPRRKAKKRHKRSPK) are enriched in basic residues.

It belongs to the Ap4A hydrolase family.

It catalyses the reaction P(1),P(4)-bis(5'-adenosyl) tetraphosphate + H2O = 2 ADP + 2 H(+). In terms of biological role, hydrolyzes diadenosine 5',5'''-P1,P4-tetraphosphate to yield ADP. The chain is Bis(5'-nucleosyl)-tetraphosphatase, symmetrical from Xylella fastidiosa (strain M23).